The chain runs to 522 residues: Tetratricopeptide repeat protein 39C (522 aa).

TPR repeat units lie at residues 254–287 (SLFM…AVDQ), 292–325 (HVCL…SRWS), and 424–457 (GLKH…ESCR).

It belongs to the TTC39 family.

In Rattus norvegicus (Rat), this protein is Tetratricopeptide repeat protein 39C (Ttc39c).